Reading from the N-terminus, the 421-residue chain is Solute carrier family 35 member F3 (421 aa).

The tract at residues 25–45 (EGEERPRDSPGPAEAQAPAGV) is disordered. 10 helical membrane passes run 66 to 86 (IFWGVAVVLCVCSSWAGSTQL), 98 to 118 (FTLTWFATNWNFLFFPLYYVG), 149 to 169 (VFFTKAAPFGVLWTLTNYLYL), 179 to 199 (DVSVLFCCNKAFVFLLSWIVL), 208 to 228 (IVAAILAIAGIVMMTYADGFH), 232 to 252 (VIGIALVVASASMSALYKVLF), 266 to 286 (LFLSILGVFNILFITCIPIIL), 305 to 325 (LCGFSVLLLTFNIVLNFGIAV), 326 to 346 (TYPTLMSLGIVLSIPVNAVID), and 352 to 372 (IVFNGVRVIAIIIIGLGFLLL). A disordered region spans residues 393–421 (KKEEPAEGAADLSSGPQSKNRRARPSFAR). Residues 411–421 (KNRRARPSFAR) show a composition bias toward basic residues.

The protein belongs to the SLC35F solute transporter family. Expressed at the highest levels in the adult cerebellum.

It localises to the membrane. The enzyme catalyses thiamine(in) = thiamine(out). Its function is as follows. Mediates thiamine transport. The sequence is that of Solute carrier family 35 member F3 from Homo sapiens (Human).